Reading from the N-terminus, the 155-residue chain is MLKKKKTEVYALGEHISMSADKARRVINQIRGRSYEETLMILELMPYRACYPILKLIYSAAANASYNMGSSEANLVISKAEVNGGTTVKKLKPRARGRSFPIKRSTCHITIVMKDISLDDEYVEMYSLKKTRWKKKSTAMPYRDMYNSGGLWDKK.

Belongs to the universal ribosomal protein uL22 family. As to quaternary structure, part of the 50S ribosomal subunit.

It is found in the plastid. The protein localises to the chloroplast. In terms of biological role, this protein binds specifically to 23S rRNA. Its function is as follows. The globular domain of the protein is located near the polypeptide exit tunnel on the outside of the subunit, while an extended beta-hairpin is found that lines the wall of the exit tunnel in the center of the 70S ribosome. The polypeptide is Large ribosomal subunit protein uL22c (rpl22) (Nicotiana sylvestris (Wood tobacco)).